The primary structure comprises 308 residues: Membrane protein insertase YidC 1 (308 aa).

The first 22 residues, 1–22 (MKSIKRFALSAMGVAMLLVLTG), serve as a signal peptide directing secretion. Cys23 carries the N-palmitoyl cysteine lipid modification. A lipid anchor (S-diacylglycerol cysteine) is attached at Cys23. 5 helical membrane passes run 60–80 (FGVA…PLGI), 135–155 (FGGV…AIYF), 168–188 (YLGI…GVLY), 211–226 (MIYM…SLFS), and 232–252 (LYWV…NYIV). Positions 263-308 (ELAKNPPKASAFSKPSGRKDVTPEQPTAITSKKKHKNRNAGKQRSR) are disordered. Over residues 293-308 (SKKKHKNRNAGKQRSR) the composition is skewed to basic residues.

It belongs to the OXA1/ALB3/YidC family. Type 2 subfamily.

It is found in the cell membrane. Functionally, required for the insertion and/or proper folding and/or complex formation of integral membrane proteins into the membrane. Involved in integration of membrane proteins that insert both dependently and independently of the Sec translocase complex, as well as at least some lipoproteins. In Streptococcus pneumoniae serotype 4 (strain ATCC BAA-334 / TIGR4), this protein is Membrane protein insertase YidC 1.